A 179-amino-acid polypeptide reads, in one-letter code: UPF0227 protein VP0969 (179 aa).

The protein belongs to the UPF0227 family.

The polypeptide is UPF0227 protein VP0969 (Vibrio parahaemolyticus serotype O3:K6 (strain RIMD 2210633)).